A 100-amino-acid polypeptide reads, in one-letter code: Noncompact myelin-associated protein (100 aa).

The Extracellular segment spans residues 1 to 28; that stretch reads MTTATTLGDAVFSLNMTRGEDILYKSSG. The chain crosses the membrane as a helical span at residues 29–49; that stretch reads AIVAAIVVVVVIIVTLVLILL. Residues 50 to 100 are Cytoplasmic-facing; that stretch reads KMYNRRMRTRRELEPKSPKPPVPPALDPNSNGSQQPAAVTSDPADVPVETR. The disordered stretch occupies residues 58 to 100; the sequence is TRRELEPKSPKPPVPPALDPNSNGSQQPAAVTSDPADVPVETR. Polar residues predominate over residues 77-87; it reads PNSNGSQQPAA.

Post-translationally, glycosylated. As to expression, expressed in the peripheral nervous system Schwann cells (at protein level).

The protein localises to the cell membrane. Functionally, plays a role in myelin formation. The chain is Noncompact myelin-associated protein (Ncmap) from Rattus norvegicus (Rat).